The sequence spans 191 residues: Calcium and integrin-binding protein 1 (191 aa).

Gly2 carries N-myristoyl glycine lipidation. EF-hand domains lie at 103–138 (TPDI…LTGE) and 148–183 (EMKQ…SPDF). Ca(2+) is bound by residues Asp116, Asp118, Asp120, Thr122, Asp127, Asp161, Asp163, Asp165, Thr167, and Glu172.

Monomer. Interacts with the heterodimeric integrin alpha-IIb/beta3 (ITGA2B-ITGB3). Interacts with ITGA2B (via cytoplasmic domain); the interaction is direct and calcium-dependent. Interacts with the protein kinases PLK2/SNK and PRKDC (via the region immediately upstream of the kinase domain). Interacts with PLK3; the interaction inhibits PLK3 kinase activity. Interacts with PSEN2. Interacts (via C-terminus) with F8. Interacts with NBR1 (via C-terminus). Interacts with FEZ1 (via C-terminus). Interacts with UBR5 (via C-terminus); the interaction is sensitive to DNA damage, and may target CIB1 for ubiquitin-mediated degradation. Interacts with IFI6; the interaction is direct. Interacts with BCL2. Interacts with ITPR3; the interaction occurs in a calcium dependent manner. Interacts with PTK2/FAK1. Interacts with MAP3K5; the interaction inhibits MAP3K5 activation by phosphorylation, and its subsequent interaction with TRAF2. Interacts (via C-terminal region) with STMN2 (via the N-terminal region); the interaction is direct, occurs in a calcium-dependent manner and attenuates the STMN2-induced neurite outgrowth inhibition. Interacts with SPHK1, the interaction occurs in a calcium-dependent manner. Interacts with ITGA2B (via C-terminal cytoplasmic tail); the interaction occurs upon platelet aggregation and is stabilized/increased in a calcium and magnesium-dependent manner. Interacts with PAK1 (via N-terminal region); the interaction is direct and occurs in a calcium-dependent manner. Interacts with RAC3 (via C-terminal region); the interaction induces their association with the cytoskeleton upon alpha-IIb/beta3 integrin-mediated adhesion. Interacts with ITGA5 and ITGAV. Interacts with MYO1C. Interacts with ITGA2B (via C-terminal cytoplasmic tail region). Interacts (via C-terminal region) with PPP3R1; the interaction increases upon cardiomyocytes hypertrophy. Interacts with CACNA1C; the interaction increases upon cardiomyocytes hypertrophy. Interacts with TAS1R2 (via C-terminus); this interaction is independent of the myristoylation state of CIB1. Interacts and forms a complex with TMC6 and TMC8; the interaction stabilizes each component of the complex.

It is found in the membrane. Its subcellular location is the cell membrane. The protein resides in the sarcolemma. It localises to the apical cell membrane. The protein localises to the cell projection. It is found in the ruffle membrane. Its subcellular location is the filopodium tip. The protein resides in the growth cone. It localises to the lamellipodium. The protein localises to the cytoplasm. It is found in the cytoskeleton. Its subcellular location is the microtubule organizing center. The protein resides in the centrosome. It localises to the perinuclear region. The protein localises to the nucleus. It is found in the neuron projection. Its subcellular location is the perikaryon. Calcium-binding protein that plays a role in the regulation of numerous cellular processes, such as cell differentiation, cell division, cell proliferation, cell migration, thrombosis, angiogenesis, cardiac hypertrophy and apoptosis. Involved in bone marrow megakaryocyte differentiation by negatively regulating thrombopoietin-mediated signaling pathway. Participates in the endomitotic cell cycle of megakaryocyte, a form of mitosis in which both karyokinesis and cytokinesis are interrupted. Plays a role in integrin signaling by negatively regulating alpha-IIb/beta3 activation in thrombin-stimulated megakaryocytes preventing platelet aggregation. Up-regulates PTK2/FAK1 activity, and is also needed for the recruitment of PTK2/FAK1 to focal adhesions; it thus appears to play an important role in focal adhesion formation. Positively regulates cell migration on fibronectin in a CDC42-dependent manner, the effect being negatively regulated by PAK1. Functions as a negative regulator of stress activated MAP kinase (MAPK) signaling pathways. Down-regulates inositol 1,4,5-trisphosphate receptor-dependent calcium signaling. Involved in sphingosine kinase SPHK1 translocation to the plasma membrane in a N-myristoylation-dependent manner preventing TNF-alpha-induced apoptosis. Regulates serine/threonine-protein kinase PLK3 activity for proper completion of cell division progression. Plays a role in microtubule (MT) dynamics during neuronal development; disrupts the MT depolymerization activity of STMN2 attenuating NGF-induced neurite outgrowth and the MT reorganization at the edge of lamellipodia. Promotes cardiomyocyte hypertrophy via activation of the calcineurin/NFAT signaling pathway. Stimulates calcineurin PPP3R1 activity by mediating its anchoring to the sarcolemma. In ischemia-induced (pathological or adaptive) angiogenesis, stimulates endothelial cell proliferation, migration and microvessel formation by activating the PAK1 and ERK1/ERK2 signaling pathway. Also promotes cancer cell survival and proliferation. May regulate cell cycle and differentiation of spermatogenic germ cells, and/or differentiation of supporting Sertoli cells. Forms a complex with TMC6/EVER1 and TMC8/EVER2 in lymphocytes and keratynocytes where CIB1 stabilizes TMC6 and TMC8 levels and reciprocally. The protein is Calcium and integrin-binding protein 1 (CIB1) of Bos taurus (Bovine).